The chain runs to 1224 residues: Protein MSN5 (1224 aa).

The segment at 1200-1224 (NKENGDMLDDPNIEDGAVGNLFDDN) is disordered.

Interacts with CEX1.

The sequence is that of Protein MSN5 (MSN5) from Saccharomyces cerevisiae (strain ATCC 204508 / S288c) (Baker's yeast).